The primary structure comprises 329 residues: Holliday junction branch migration complex subunit RuvB (329 aa).

Positions 1–20 (MSRILEGDPVEGEKSWENEL) are disordered. The segment at 1–181 (MSRILEGDPV…FGIVERLQFY (181 aa)) is large ATPase domain (RuvB-L). Basic and acidic residues predominate over residues 11 to 20 (EGEKSWENEL). Residues leucine 20, arginine 21, glycine 62, lysine 65, threonine 66, threonine 67, 128–130 (EDY), arginine 171, tyrosine 181, and arginine 218 contribute to the ATP site. Position 66 (threonine 66) interacts with Mg(2+). Positions 182–252 (DKDALRQILM…IAVYALNQLG (71 aa)) are small ATPAse domain (RuvB-S). The head domain (RuvB-H) stretch occupies residues 255–329 (QYGLDLMDRR…FAKSSVLADK (75 aa)). DNA-binding residues include arginine 291, lysine 310, and arginine 315.

It belongs to the RuvB family. Homohexamer. Forms an RuvA(8)-RuvB(12)-Holliday junction (HJ) complex. HJ DNA is sandwiched between 2 RuvA tetramers; dsDNA enters through RuvA and exits via RuvB. An RuvB hexamer assembles on each DNA strand where it exits the tetramer. Each RuvB hexamer is contacted by two RuvA subunits (via domain III) on 2 adjacent RuvB subunits; this complex drives branch migration. In the full resolvosome a probable DNA-RuvA(4)-RuvB(12)-RuvC(2) complex forms which resolves the HJ.

It is found in the cytoplasm. The catalysed reaction is ATP + H2O = ADP + phosphate + H(+). The RuvA-RuvB-RuvC complex processes Holliday junction (HJ) DNA during genetic recombination and DNA repair, while the RuvA-RuvB complex plays an important role in the rescue of blocked DNA replication forks via replication fork reversal (RFR). RuvA specifically binds to HJ cruciform DNA, conferring on it an open structure. The RuvB hexamer acts as an ATP-dependent pump, pulling dsDNA into and through the RuvAB complex. RuvB forms 2 homohexamers on either side of HJ DNA bound by 1 or 2 RuvA tetramers; 4 subunits per hexamer contact DNA at a time. Coordinated motions by a converter formed by DNA-disengaged RuvB subunits stimulates ATP hydrolysis and nucleotide exchange. Immobilization of the converter enables RuvB to convert the ATP-contained energy into a lever motion, pulling 2 nucleotides of DNA out of the RuvA tetramer per ATP hydrolyzed, thus driving DNA branch migration. The RuvB motors rotate together with the DNA substrate, which together with the progressing nucleotide cycle form the mechanistic basis for DNA recombination by continuous HJ branch migration. Branch migration allows RuvC to scan DNA until it finds its consensus sequence, where it cleaves and resolves cruciform DNA. The sequence is that of Holliday junction branch migration complex subunit RuvB from Bdellovibrio bacteriovorus (strain ATCC 15356 / DSM 50701 / NCIMB 9529 / HD100).